We begin with the raw amino-acid sequence, 271 residues long: DNA repair protein RecO (271 aa).

It belongs to the RecO family.

Functionally, involved in DNA repair and RecF pathway recombination. The sequence is that of DNA repair protein RecO from Rhodococcus erythropolis (strain PR4 / NBRC 100887).